The chain runs to 161 residues: MSIIIGIDPGSYVTGYGIIKSEKNTLKHIKSGSIFLKKHDFKKRLKIIYICIKNIINKFKPKYFVIEQIFFSKNPSSVLKLGQASCAATLAAINLDILIFEYASKKIKKILVGDGKAKKLQVKNKVCSILNLSKSIGIDTSDALAVAITHHYLINNKDKIF.

Residues Asp8, Glu67, and Asp139 contribute to the active site. Positions 8, 67, and 139 each coordinate Mg(2+).

It belongs to the RuvC family. As to quaternary structure, homodimer which binds Holliday junction (HJ) DNA. The HJ becomes 2-fold symmetrical on binding to RuvC with unstacked arms; it has a different conformation from HJ DNA in complex with RuvA. In the full resolvosome a probable DNA-RuvA(4)-RuvB(12)-RuvC(2) complex forms which resolves the HJ. Requires Mg(2+) as cofactor.

Its subcellular location is the cytoplasm. It catalyses the reaction Endonucleolytic cleavage at a junction such as a reciprocal single-stranded crossover between two homologous DNA duplexes (Holliday junction).. Functionally, the RuvA-RuvB-RuvC complex processes Holliday junction (HJ) DNA during genetic recombination and DNA repair. Endonuclease that resolves HJ intermediates. Cleaves cruciform DNA by making single-stranded nicks across the HJ at symmetrical positions within the homologous arms, yielding a 5'-phosphate and a 3'-hydroxyl group; requires a central core of homology in the junction. The consensus cleavage sequence is 5'-(A/T)TT(C/G)-3'. Cleavage occurs on the 3'-side of the TT dinucleotide at the point of strand exchange. HJ branch migration catalyzed by RuvA-RuvB allows RuvC to scan DNA until it finds its consensus sequence, where it cleaves and resolves the cruciform DNA. The polypeptide is Crossover junction endodeoxyribonuclease RuvC (Wigglesworthia glossinidia brevipalpis).